The primary structure comprises 640 residues: MGQPSLTWMLMVVVASWFITTAATDTSEARWCSECHSNATCTEDEAVTTCTCQEGFTGDGLTCVDLDECAIPGAHNCSANSSCVNTPGSFSCVCPEGFRLSPGLGCTDVDECAEPGLSHCHALATCVNVVGSYLCVCPAGYRGDGWHCECSPGSCGPGLDCVPEGDALVCADPCQAHRTLDEYWRSTEYGEGYACDTDLRGWYRFVGQGGARMAETCVPVLRCNTAAPMWLNGTHPSSDEGIVSRKACAHWSGHCCLWDASVQVKACAGGYYVYNLTAPPECHLAYCTDPSSVEGTCEECSIDEDCKSNNGRWHCQCKQDFNITDISLLEHRLECGANDMKVSLGKCQLKSLGFDKVFMYLSDSRCSGFNDRDNRDWVSVVTPARDGPCGTVLTRNETHATYSNTLYLADEIIIRDLNIKINFACSYPLDMKVSLKTALQPMVSALNIRVGGTGMFTVRMALFQTPSYTQPYQGSSVTLSTEAFLYVGTMLDGGDLSRFALLMTNCYATPSSNATDPLKYFIIQDRCPHTRDSTIQVVENGESSQGRFSVQMFRFAGNYDLVYLHCEVYLCDTMNEKCKPTCSGTRFRSGSVIDQSRVLNLGPITRKGVQATVSRAFSSLGLLKVWLPLLLSATLTLTFQ.

A signal peptide spans 1 to 24 (MGQPSLTWMLMVVVASWFITTAAT). Residues 28-64 (EARWCSECHSNATCTEDEAVTTCTCQEGFTGDGLTCV) enclose the EGF-like 1 domain. 21 cysteine pairs are disulfide-bonded: C32-C41, C35-C50, C52-C63, C69-C83, C77-C92, C94-C106, C112-C126, C120-C135, C137-C148, C150-C161, C155-C170, C174-C267, C195-C282, C217-C255, C223-C287, C248-C256, C297-C306, C300-C315, C317-C347, C335-C425, and C366-C389. The N-linked (GlcNAc...) asparagine glycan is linked to N38. The region spanning 65–107 (DLDECAIPGAHNCSANSSCVNTPGSFSCVCPEGFRLSPGLGCT) is the EGF-like 2; calcium-binding domain. N76 and N80 each carry an N-linked (GlcNAc...) asparagine glycan. In terms of domain architecture, EGF-like 3; calcium-binding spans 108-149 (DVDECAEPGLSHCHALATCVNVVGSYLCVCPAGYRGDGWHCE). Residues 150–171 (CSPGSCGPGLDCVPEGDALVCA) are beta hairpin. The segment at 172 to 291 (DPCQAHRTLD…CHLAYCTDPS (120 aa)) is D10C. An N-linked (GlcNAc...) (complex) asparagine glycan is attached at N232. N275 is a glycosylation site (N-linked (GlcNAc...) (high mannose) asparagine). An EGF-like 4 domain is found at 292-323 (SVEGTCEECSIDEDCKSNNGRWHCQCKQDFNI). Residue N322 is glycosylated (N-linked (GlcNAc...) (complex) asparagine). A ZP-N region spans residues 334 to 429 (ECGANDMKVS…KINFACSYPL (96 aa)). Residues 334 to 589 (ECGANDMKVS…PTCSGTRFRS (256 aa)) enclose the ZP domain. N-linked (GlcNAc...) (complex) asparagine glycosylation is present at N396. Residues 430–453 (DMKVSLKTALQPMVSALNIRVGGT) form a flexible ZP-N/ZP-C linker; important for secretion and polymerization into filaments region. Positions 454 to 465 (GMFTVRMALFQT) are internal hydrophobic patch (IHP). The tract at residues 454 to 589 (GMFTVRMALF…PTCSGTRFRS (136 aa)) is ZP-C. 3 disulfide bridges follow: C506-C566, C527-C582, and C571-C578. N-linked (GlcNAc...) (complex) asparagine; alternate glycosylation occurs at N513. A glycan (N-linked (GlcNAc...) (high mannose) asparagine; alternate) is linked at N513. Positions 586 to 589 (RFRS) are essential for cleavage by HPN. Residues 598-606 (VLNLGPITR) form an external hydrophobic patch (EHP); regulates polymerization into filaments region. S614 carries the GPI-anchor amidated serine lipid modification. A propeptide spans 615 to 640 (RAFSSLGLLKVWLPLLLSATLTLTFQ) (removed in mature form).

Homodimer that then polymerizes into long filaments. The filaments can additionally assemble laterally to form a sheet. The filaments consist of a zigzag-shaped backbone with laterally protruding arms which interact with bacterial adhesin fimH. Two fimH molecules can bind to a single UMOD monomer. N-glycosylated. N-glycan heterogeneity at Asn-232: Hex7HexNAc6 (major) and dHex1Hex7HexNAc6 (minor); at Asn-322: dHex1Hex6HexNAc5 (minor), dHex1Hex7HexNAc6 (major) and dHex1Hex8HexNAc7 (minor); at Asn-396: Hex6HexNAc5 (major), dHex1Hex6HexNAc5 (minor) and Hex7HexNAc6 (minor). Glycosylated Asn-232 interacts with E.coli adhesin fimH. Other complex glycosylation sites may serve as binding sites for proteins from other bacteria inclduding K.pneumoniae, P.aeruginosa and S.mitis. In terms of processing, proteolytically cleaved at a conserved C-terminal proteolytic cleavage site to generate the secreted form found in urine. This cleavage is catalyzed by HPN. As to expression, expressed in the tubular cells of the kidney. Most abundant protein in normal urine (at protein level). Synthesized exclusively in the kidney. Expressed exclusively by epithelial cells of the thick ascending limb of Henle's loop (TALH) and of distal convoluted tubule lumen.

It is found in the apical cell membrane. The protein resides in the basolateral cell membrane. The protein localises to the cell projection. Its subcellular location is the cilium membrane. It localises to the secreted. Functionally, functions in biogenesis and organization of the apical membrane of epithelial cells of the thick ascending limb of Henle's loop (TALH), where it promotes formation of complex filamentous gel-like structure that may play a role in the water barrier permeability. May serve as a receptor for binding and endocytosis of cytokines (IL-1, IL-2) and TNF. Facilitates neutrophil migration across renal epithelia. Its function is as follows. In the urine, may contribute to colloid osmotic pressure, retards passage of positively charged electrolytes, and inhibits formation of liquid containing supersaturated salts and subsequent formation of salt crystals. Protects against urinary tract infections by binding to type 1 fimbriated E.coli. Binds to bacterial adhesin fimH which mediates the stable formation of bacterial aggregates, prevents the binding of E.coli to uroplakins UPK1A and UPK1B which act as urothelial receptors for type I fimbriae, and allows for pathogen clearance through micturation. Also promotes aggregation of other bacteria including K.pneumoniae, P.aeruginosa and S.mitis and so may also protect against other uropathogens. This Homo sapiens (Human) protein is Uromodulin (UMOD).